Reading from the N-terminus, the 698-residue chain is Effector protein AvrPphDPgy (698 aa).

Positions 1–15 are enriched in polar residues; it reads MNPLRSIQHNITTPP. Disordered regions lie at residues 1–36 and 171–200; these read MNPLRSIQHNITTPPISGGQPLDAVGPQAQQSHPKR and VDSSSPLLSSPDHSRPPSQHIGSVRRDSDS. The segment covering 172–181 has biased composition (low complexity); it reads DSSSPLLSSP.

The protein localises to the secreted. Its function is as follows. Effector protein involved in non-host recognition. The chain is Effector protein AvrPphDPgy (avrPphDPgy) from Pseudomonas savastanoi pv. glycinea (Pseudomonas syringae pv. glycinea).